Here is a 216-residue protein sequence, read N- to C-terminus: Peptide methionine sulfoxide reductase MsrA (216 aa).

C54 is a catalytic residue.

This sequence belongs to the MsrA Met sulfoxide reductase family.

The catalysed reaction is L-methionyl-[protein] + [thioredoxin]-disulfide + H2O = L-methionyl-(S)-S-oxide-[protein] + [thioredoxin]-dithiol. The enzyme catalyses [thioredoxin]-disulfide + L-methionine + H2O = L-methionine (S)-S-oxide + [thioredoxin]-dithiol. Its function is as follows. Has an important function as a repair enzyme for proteins that have been inactivated by oxidation. Catalyzes the reversible oxidation-reduction of methionine sulfoxide in proteins to methionine. The protein is Peptide methionine sulfoxide reductase MsrA of Xanthomonas oryzae pv. oryzae (strain PXO99A).